The following is a 682-amino-acid chain: Methionine--tRNA ligase (682 aa).

Positions 15–25 (PYANGAIHLGH) match the 'HIGH' region motif. Residues C146, C149, C159, and C162 each contribute to the Zn(2+) site. The short motif at 331–335 (KMSKS) is the 'KMSKS' region element. Residue K334 participates in ATP binding. Residues 580–682 (DLAKLDMRVA…NGVTAGMQVK (103 aa)) form the tRNA-binding domain.

It belongs to the class-I aminoacyl-tRNA synthetase family. MetG type 1 subfamily. In terms of assembly, homodimer. Zn(2+) is required as a cofactor.

The protein resides in the cytoplasm. It catalyses the reaction tRNA(Met) + L-methionine + ATP = L-methionyl-tRNA(Met) + AMP + diphosphate. Functionally, is required not only for elongation of protein synthesis but also for the initiation of all mRNA translation through initiator tRNA(fMet) aminoacylation. This chain is Methionine--tRNA ligase, found in Haemophilus influenzae (strain 86-028NP).